Reading from the N-terminus, the 230-residue chain is MRLAGPLRIVALIIIMGLTWILVTILLGGPGVGLPRIQQFFTSPENSVTAEPRARKYKCGLPQPCPEEHLSFRIVSGAANVIGPKICLEDKMLMSSVKDNVGRGLNIALVNGVSGELLEARAFDMWAGDVNDLLKFIRPLHEGTLVFVASYDDPATKMNEETRKLFSELGSRNAKDLAFRDSWVFVGAKGVQNKSPFEQHMKNSKHTNKYEGWPEALEMEGCIPRRSIAG.

A signal peptide spans 1 to 33; it reads MRLAGPLRIVALIIIMGLTWILVTILLGGPGVG. 2 disulfides stabilise this stretch: Cys59-Cys87 and Cys65-Cys222. The 159-residue stretch at 68–226 folds into the GG-type lectin domain; that stretch reads EHLSFRIVSG…LEMEGCIPRR (159 aa).

It belongs to the FAM3 family.

It localises to the secreted. This Mus musculus (Mouse) protein is Protein FAM3A (Fam3a).